The following is a 214-amino-acid chain: Metalloproteinase inhibitor 3 (214 aa).

Residues M1 to G26 form the signal peptide. C27 serves as a coordination point for Zn(2+). Involved in metalloproteinase-binding stretches follow at residues C27–A30 and E91–S92. Disulfide bonds link C27/C94, C29/C121, C39/C146, C148/C195, C153/C158, and C166/C187. Residues C27–C146 enclose the NTR domain.

The protein belongs to the protease inhibitor I35 (TIMP) family.

Its subcellular location is the secreted. It is found in the extracellular space. The protein localises to the extracellular matrix. In terms of biological role, complexes with metalloproteinases (such as collagenases) and irreversibly inactivates them by binding to their catalytic zinc cofactor. May form part of a tissue-specific acute response to remodeling stimuli. In Xenopus laevis (African clawed frog), this protein is Metalloproteinase inhibitor 3 (timp3).